The chain runs to 162 residues: RNA pyrophosphohydrolase (162 aa).

The Nudix hydrolase domain occupies 7-149; it reads KYRPCVGIML…KKEVYKTVIE (143 aa). A Nudix box motif is present at residues 40-61; the sequence is GGVDDGEELEQAALRELLEEVG.

The protein belongs to the Nudix hydrolase family. RppH subfamily. The cofactor is a divalent metal cation.

Functionally, accelerates the degradation of transcripts by removing pyrophosphate from the 5'-end of triphosphorylated RNA, leading to a more labile monophosphorylated state that can stimulate subsequent ribonuclease cleavage. In Wolbachia sp. subsp. Drosophila simulans (strain wRi), this protein is RNA pyrophosphohydrolase.